Reading from the N-terminus, the 125-residue chain is Lymphocyte antigen 6 complex locus protein G6c (125 aa).

A signal peptide spans 1 to 18 (MKALMLLTLSVLLCWVSA). One can recognise a UPAR/Ly6 domain in the interval 20–111 (IRCHSCYKVP…PRPTPALGLV (92 aa)). 3 disulfide bridges follow: Cys22-Cys47, Cys25-Cys33, and Cys39-Cys65. Residue Asn88 is glycosylated (N-linked (GlcNAc...) asparagine). Cys92 and Cys97 form a disulfide bridge. Ser99 carries the GPI-anchor amidated serine lipid modification. The propeptide at 100–125 (AGPRPTPALGLVFLTSLAGLGLWLLH) is removed in mature form.

As to quaternary structure, monomer. In terms of processing, N-glycosylated. As to expression, highly expressed at the leading edges of cells, on filopodia.

Its subcellular location is the cell membrane. The polypeptide is Lymphocyte antigen 6 complex locus protein G6c (LY6G6C) (Homo sapiens (Human)).